A 100-amino-acid chain; its full sequence is Acylphosphatase (100 aa).

Residues 14-100 (RLSAWVHGHV…RGDLTGFEER (87 aa)) enclose the Acylphosphatase-like domain. Residues Arg29 and Asn47 contribute to the active site.

It belongs to the acylphosphatase family.

The enzyme catalyses an acyl phosphate + H2O = a carboxylate + phosphate + H(+). The protein is Acylphosphatase (acyP) of Nocardia farcinica (strain IFM 10152).